The sequence spans 63 residues: Large ribosomal subunit protein uL29 (63 aa).

This sequence belongs to the universal ribosomal protein uL29 family.

This chain is Large ribosomal subunit protein uL29, found in Vibrio vulnificus (strain CMCP6).